We begin with the raw amino-acid sequence, 243 residues long: Proteasome subunit beta (243 aa).

2 stretches are compositionally biased toward basic and acidic residues: residues 1-11 (MRTPTHDEFSG) and 33-47 (NADR…KETK). Residues 1–49 (MRTPTHDEFSGRLDSLNGDRSNVFGPELGEFSNADRRADELGDKETKTG) constitute a propeptide, removed in mature form; by autocatalysis. A disordered region spans residues 1–50 (MRTPTHDEFSGRLDSLNGDRSNVFGPELGEFSNADRRADELGDKETKTGT). Thr-50 functions as the Nucleophile in the catalytic mechanism. The residue at position 129 (Ser-129) is a Phosphoserine.

This sequence belongs to the peptidase T1B family. In terms of assembly, the 20S proteasome core is composed of 14 alpha and 14 beta subunits that assemble into four stacked heptameric rings, resulting in a barrel-shaped structure. The two inner rings, each composed of seven catalytic beta subunits, are sandwiched by two outer rings, each composed of seven alpha subunits. H.volcanii produces at least 2 types of 20S proteasomes: an alpha1-beta proteasome and a proteasome containing all three subunits (alpha1, alpha2, and beta) that appears to be asymmetrical with homo-oligomeric alpha1 and alpha2 rings positioned on separate ends. The catalytic chamber with the active sites is on the inside of the barrel. Has probably a gated structure, the ends of the cylinder being occluded by the N-termini of the alpha-subunits. Is likely capped at one or both ends by the proteasome regulatory ATPase, PAN.

It localises to the cytoplasm. It catalyses the reaction Cleavage of peptide bonds with very broad specificity.. The formation of the proteasomal ATPase PAN-20S proteasome complex, via the docking of the C-termini of PAN into the intersubunit pockets in the alpha-rings, triggers opening of the gate for substrate entry. Interconversion between the open-gate and close-gate conformations leads to a dynamic regulation of the 20S proteasome proteolysis activity. In vitro, the chymotrypsin-like activity of the alpha1-beta proteasome is potently inhibited by carbobenzoxyl-leucinyl-leucinyl-leucinal-H (MG132) and significantly by N-acetyl-leucinyl-leucinyl-norleucinal-H (calpain inhibitor I). Component of the proteasome core, a large protease complex with broad specificity involved in protein degradation. The H.volcanii alpha1-beta proteasome is able to cleave oligopeptides after Phe, Tyr and Trp, poorly after Glu but not after Arg. Thus, displays chymotrypsin-like activity, low caspase-like activity but no trypsin-like activity. This is Proteasome subunit beta from Haloferax volcanii (strain ATCC 29605 / DSM 3757 / JCM 8879 / NBRC 14742 / NCIMB 2012 / VKM B-1768 / DS2) (Halobacterium volcanii).